A 354-amino-acid polypeptide reads, in one-letter code: MVRILLATSTVELEDLVKRAIEGDASAELVLIARSGREAVRMTGELLPDIVAVELCPSGDDSAETVREIMIAAPTPVVMLSHRDGSQLGTISARALEAGALAVIPAPAAHGMQLEQPAIEKFLSTIKAMSQVKVVRQWRQKVRGDRAAKDQPPTARTPIGIVGIAASTGGPAAIRAILKDISADLPVPILIVQHMSNGFIDGVAASLNATVPLTVKVARNGELLKPGTVYLAPDNCQLGVSGRSRLRVSDDAPVNGFKPSGSYLFGSIARAFKGESLAVVLTGMGDDGTEGLRALRMAGGKAIAQDEKSSVVFGMPKSAIGAGLVDLVLPLESIAENITAIARGRSEPEGETRT.

The 119-residue stretch at 3–121 (RILLATSTVE…MQLEQPAIEK (119 aa)) folds into the Response regulatory domain. Positions 158–340 (PIGIVGIAAS…LESIAENITA (183 aa)) constitute a CheB-type methylesterase domain. Active-site residues include S167, H194, and D287.

This sequence belongs to the CheB family.

The protein resides in the cytoplasm. It catalyses the reaction [protein]-L-glutamate 5-O-methyl ester + H2O = L-glutamyl-[protein] + methanol + H(+). It carries out the reaction L-glutaminyl-[protein] + H2O = L-glutamyl-[protein] + NH4(+). In terms of biological role, involved in chemotaxis. Part of a chemotaxis signal transduction system that modulates chemotaxis in response to various stimuli. Catalyzes the demethylation of specific methylglutamate residues introduced into the chemoreceptors (methyl-accepting chemotaxis proteins or MCP) by CheR. Also mediates the irreversible deamidation of specific glutamine residues to glutamic acid. The polypeptide is Protein-glutamate methylesterase/protein-glutamine glutaminase of group 3 operon (Rhizobium meliloti (strain 1021) (Ensifer meliloti)).